Here is a 500-residue protein sequence, read N- to C-terminus: Cytochrome P450 71B38 (500 aa).

A helical transmembrane segment spans residues 3-23 (IFLCFLLLLPLSLILFKKLLP). C441 is a heme binding site.

This sequence belongs to the cytochrome P450 family. Heme is required as a cofactor.

The protein resides in the membrane. In Arabidopsis thaliana (Mouse-ear cress), this protein is Cytochrome P450 71B38 (CYP71B38).